The following is a 309-amino-acid chain: Low density lipoprotein receptor adapter protein 1-B (309 aa).

Residues 41–195 (LLEGMLFHLK…SDGEGASSSQ (155 aa)) enclose the PID domain. The interval 179–201 (DKREKSGSDGEGASSSQSDGSSS) is disordered. The segment covering 189-201 (EGASSSQSDGSSS) has biased composition (low complexity). A Clathrin box motif is present at residues 213–217 (LLDFE). The segment at 250–277 (WELDDGLDEAFARLAESRTNPQVLDIGL) is AP-2 complex binding. A [DE]-X(1,2)-F-X-X-[FL]-X-X-X-R motif motif is present at residues 258-267 (EAFARLAESR).

In terms of assembly, interacts (via PID domain) with ldlr (via NPXY motif). Binds to soluble clathrin trimers and to the adapter protein complex 2 (AP-2, beta 2 subunit). Binds to phosphoinositides, which regulate clathrin bud assembly at the cell surface. Interacts with the VLDL receptor (vldlr). Interacts with the vitellogenin receptor. As to expression, expressed at high level during oogenesis and embryogenesis. Found at low level in the adult liver and spleen. Found at very low level in testis and heart. Not found in the oocyte vegetal cortex.

It localises to the cytoplasm. Functionally, adapter protein (clathrin-associated sorting protein (CLASP)) required for efficient endocytosis of the LDL receptor (LDLR). Also involved in the vitellogenin receptor mediated endocytosis of nutrients during oogenesis. The protein is Low density lipoprotein receptor adapter protein 1-B of Xenopus laevis (African clawed frog).